A 46-amino-acid polypeptide reads, in one-letter code: Lantibiotic streptin (46 aa).

A propeptide spanning residues 1 to 24 is cleaved from the precursor; it reads MNNTIKDFDLDLKTNKKDTATPYV.

It belongs to the type A lantibiotic family. Post-translationally, maturation of lantibiotics involves the enzymatic conversion of Thr, and Ser into dehydrated AA and the formation of thioether bonds with cysteine. This is followed by membrane translocation and cleavage of the modified precursor.

In terms of biological role, lanthionine-containing peptide antibiotic (lantibiotic) active on certain Gram-positive bacteria. The bactericidal activity of lantibiotics is based on depolarization of energized bacterial cytoplasmic membranes, initiated by the formation of aqueous transmembrane pores. This is Lantibiotic streptin (srtA) from Streptococcus pyogenes serotype M1.